A 309-amino-acid chain; its full sequence is UDP-N-acetylenolpyruvoylglucosamine reductase (309 aa).

One can recognise an FAD-binding PCMH-type domain in the interval 33-198 (RVGGPAQVLF…TSARFRGTPA (166 aa)). The active site involves arginine 178. The Proton donor role is filled by serine 227. The active site involves glutamate 297.

This sequence belongs to the MurB family. Requires FAD as cofactor.

The protein localises to the cytoplasm. It carries out the reaction UDP-N-acetyl-alpha-D-muramate + NADP(+) = UDP-N-acetyl-3-O-(1-carboxyvinyl)-alpha-D-glucosamine + NADPH + H(+). The protein operates within cell wall biogenesis; peptidoglycan biosynthesis. In terms of biological role, cell wall formation. The polypeptide is UDP-N-acetylenolpyruvoylglucosamine reductase (Rhodopseudomonas palustris (strain HaA2)).